Consider the following 427-residue polypeptide: Caspase recruitment domain-containing protein 8 (427 aa).

A disordered region spans residues 1 to 23 (MGIPTSSVSEEQESSEGQDSGDI). Residues 51–186 (FLGPEGNVDV…FYAVLEKPSF (136 aa)) are ZU5. In terms of domain architecture, FIIND spans 51–336 (FLGPEGNVDV…IQLGAASAPP (286 aa)). The UPA stretch occupies residues 187 to 336 (SLMGILLRIA…IQLGAASAPP (150 aa)). Residues 336-426 (PAFSGAAFVK…YLVSYLRQQS (91 aa)) enclose the CARD domain.

In terms of assembly, interacts with DPP9; leading to inhibit activation of the inflammasome. DPP9 acts via formation of a ternary complex, composed of a DPP9 homodimer, one full-length CARD8 protein, and one cleaved C-terminus of CARD8 (Caspase recruitment domain-containing protein 8, C-terminus). Interacts with DPP8; leading to inhibit activation of the inflammasome, probably via formation of a ternary complex with DPP8. Interacts with NLRP3. Interacts with IKBKG/NEMO. Interacts with DRAL. Binds to caspase-1 (CASP1), CARD16/pseudo-ICE and CARD18/ICEBERG. Interacts with NLRP2 (via NACHT domain). Interacts with the C-terminal part of CARD8 (Caspase recruitment domain-containing protein 8, C-terminus) in absence of pathogens and other damage-associated signals. As to quaternary structure, interacts with the N-terminal part of CARD8 (Caspase recruitment domain-containing protein 8, N-terminus) in absence of pathogens and other damage-associated signals. Homomultimer; forms the CARD8 inflammasome polymeric complex, a filament composed of homopolymers of this form in response to pathogens and other damage-associated signals. The CARD8 inflammasome polymeric complex directly recruits pro-caspase-1 (proCASP1) independently of PYCARD/ASC. Interacts (via CARD domain) with CASP1 (via CARD domain); leading to CASP1 activation. Undergoes autocatalytic processing within the FIIND domain to generate the N-terminal and C-terminal parts, which are associated non-covalently in absence of pathogens and other damage-associated signals. Post-translationally, ubiquitinated by the N-end rule pathway in response to pathogens and other damage-associated signals, leading to its degradation by the proteasome and subsequent release of the cleaved C-terminal part of the protein (Caspase recruitment domain-containing protein 8, C-terminus), which polymerizes and forms the CARD8 inflammasome.

The protein resides in the cytoplasm. Its subcellular location is the nucleus. It localises to the inflammasome. Its activity is regulated as follows. CARD8 inflammasome is inhibited by DPP8 and DPP9, which sequester the C-terminal fragment of CARD8 (Caspase recruitment domain-containing protein 8, C-terminus) in a ternary complex, thereby preventing CARD8 oligomerization and activation. CARD8 inflammasome is activated by Val-boroPro (Talabostat, PT-100), an inhibitor of dipeptidyl peptidases DPP8 and DPP9. Val-boroPro relieves inhibition of DPP8 and/or DPP9 by inducing the proteasome-mediated destruction of the N-terminal part of CARD8, releasing its C-terminal part from autoinhibition. Functionally, inflammasome sensor, which mediates inflammasome activation in response to various pathogen-associated signals, leading to subsequent pyroptosis of CD4(+) T-cells and macrophages. Inflammasomes are supramolecular complexes that assemble in the cytosol in response to pathogens and other damage-associated signals and play critical roles in innate immunity and inflammation. Acts as a recognition receptor (PRR): recognizes specific pathogens and other damage-associated signals, such as Val-boroPro inhibitor, and mediates CARD8 inflammasome activation. In response to pathogen-associated signals, the N-terminal part of CARD8 is degraded by the proteasome, releasing the cleaved C-terminal part of the protein (Caspase recruitment domain-containing protein 8, C-terminus), which polymerizes to initiate the formation of the inflammasome complex: the CARD8 inflammasome directly recruits pro-caspase-1 (proCASP1) independently of PYCARD/ASC and promotes caspase-1 (CASP1) activation, which subsequently cleaves and activates inflammatory cytokines IL1B and IL18 and gasdermin-D (GSDMD), leading to pyroptosis. Also acts as a negative regulator of the NLRP3 inflammasome. May also act as an inhibitor of NF-kappa-B activation. Constitutes the precursor of the CARD8 inflammasome, which mediates autoproteolytic processing within the FIIND domain to generate the N-terminal and C-terminal parts, which are associated non-covalently in absence of pathogens and other damage-associated signals. Its function is as follows. Regulatory part that prevents formation of the CARD8 inflammasome: in absence of pathogens and other damage-associated signals, interacts with the C-terminal part of CARD8 (Caspase recruitment domain-containing protein 8, C-terminus), preventing activation of the CARD8 inflammasome. In response to pathogen-associated signals, this part is ubiquitinated by the N-end rule pathway and degraded by the proteasome, releasing the cleaved C-terminal part of the protein, which polymerizes and forms the CARD8 inflammasome. In terms of biological role, constitutes the active part of the CARD8 inflammasome. In absence of pathogens and other damage-associated signals, interacts with the N-terminal part of CARD8 (Caspase recruitment domain-containing protein 8, N-terminus), preventing activation of the CARD8 inflammasome. In response to pathogen-associated signals, the N-terminal part of CARD8 is degraded by the proteasome, releasing this form, which polymerizes to form the CARD8 inflammasome complex: the CARD8 inflammasome complex then directly recruits pro-caspase-1 (proCASP1) and promotes caspase-1 (CASP1) activation, leading to gasdermin-D (GSDMD) cleavage and subsequent pyroptosis. This Pongo abelii (Sumatran orangutan) protein is Caspase recruitment domain-containing protein 8.